The sequence spans 434 residues: Mitochondrial distribution and morphology protein 12 (434 aa).

An SMP-LTD domain is found at 1-434 (MSIDIDWERA…VYPSFWTFLV (434 aa)). The span at 70-83 (YEEDDNENFSESSE) shows a compositional bias: acidic residues. 2 disordered regions span residues 70–141 (YEED…LRSP) and 181–275 (TPLG…DDLP). Basic and acidic residues predominate over residues 86–97 (SPTREPVDRYGS). The segment covering 215–237 (SAQSRPSTANTGNTLLSRGSMSS) has biased composition (polar residues).

Belongs to the MDM12 family. In terms of assembly, component of the ER-mitochondria encounter structure (ERMES) or MDM complex, composed of MMM1, MDM10, MDM12 and MDM34. An MMM1 homodimer associates with one molecule of MDM12 on each side in a pairwise head-to-tail manner, and the SMP-LTD domains of MMM1 and MDM12 generate a continuous hydrophobic tunnel for phospholipid trafficking.

The protein resides in the mitochondrion outer membrane. It localises to the endoplasmic reticulum membrane. Component of the ERMES/MDM complex, which serves as a molecular tether to connect the endoplasmic reticulum (ER) and mitochondria. Components of this complex are involved in the control of mitochondrial shape and protein biogenesis, and function in nonvesicular lipid trafficking between the ER and mitochondria. MDM12 is required for the interaction of the ER-resident membrane protein MMM1 and the outer mitochondrial membrane-resident beta-barrel protein MDM10. The MDM12-MMM1 subcomplex functions in the major beta-barrel assembly pathway that is responsible for biogenesis of all mitochondrial outer membrane beta-barrel proteins, and acts in a late step after the SAM complex. The MDM10-MDM12-MMM1 subcomplex further acts in the TOM40-specific pathway after the action of the MDM12-MMM1 complex. Essential for establishing and maintaining the structure of mitochondria and maintenance of mtDNA nucleoids. This Blastomyces gilchristii (strain SLH14081) (Blastomyces dermatitidis) protein is Mitochondrial distribution and morphology protein 12.